The sequence spans 247 residues: 3-deoxy-manno-octulosonate cytidylyltransferase (247 aa).

The protein belongs to the KdsB family.

It localises to the cytoplasm. The enzyme catalyses 3-deoxy-alpha-D-manno-oct-2-ulosonate + CTP = CMP-3-deoxy-beta-D-manno-octulosonate + diphosphate. The protein operates within nucleotide-sugar biosynthesis; CMP-3-deoxy-D-manno-octulosonate biosynthesis; CMP-3-deoxy-D-manno-octulosonate from 3-deoxy-D-manno-octulosonate and CTP: step 1/1. Its pathway is bacterial outer membrane biogenesis; lipopolysaccharide biosynthesis. Its function is as follows. Activates KDO (a required 8-carbon sugar) for incorporation into bacterial lipopolysaccharide in Gram-negative bacteria. In Chlorobium limicola (strain DSM 245 / NBRC 103803 / 6330), this protein is 3-deoxy-manno-octulosonate cytidylyltransferase.